The primary structure comprises 379 residues: UPF0450 protein C17orf58 homolog (379 aa).

An N-terminal signal peptide occupies residues 1–17 (MIPALTVPLLFLCATSA). Disordered stretches follow at residues 76–95 (RTRA…PDKT) and 162–194 (TASQ…MNPH). Over residues 180 to 194 (SMDHESNRPGKMNPH) the composition is skewed to basic and acidic residues. Disulfide bonds link Cys234/Cys308, Cys238/Cys312, and Cys249/Cys378. Positions 234 to 378 (CIAECHRDKD…KVLAAAHSKC (145 aa)) constitute an NTR domain.

This sequence belongs to the UPF0450 family.

This is UPF0450 protein C17orf58 homolog from Xenopus laevis (African clawed frog).